A 66-amino-acid polypeptide reads, in one-letter code: Large ribosomal subunit protein bL33c (66 aa).

It belongs to the bacterial ribosomal protein bL33 family.

The protein localises to the plastid. It is found in the chloroplast. The protein is Large ribosomal subunit protein bL33c of Chloranthus spicatus (Chulantree).